Consider the following 1573-residue polypeptide: Synaptojanin-1 (1573 aa).

The 324-residue stretch at 119–442 (VRKVLNSGNF…GDSISKIYAG (324 aa)) folds into the SAC domain. Residues 500–899 (GSLRVSEQTL…GPPDGTVLVS (400 aa)) form a catalytic region. Phosphoserine is present on residues Ser820 and Ser830. One can recognise an RRM domain in the interval 902–971 (SSLPENNFFD…RTITIALKSP (70 aa)). The segment covering 1029–1054 (HLQPSSSSGLGTSPSSSPRTSPCQSP) has biased composition (low complexity). Disordered stretches follow at residues 1029 to 1322 (HLQP…PLKI), 1341 to 1360 (SVQTSPVPTPDPKRLIQLPS), 1370 to 1463 (VSCM…GFKD), and 1535 to 1573 (SRRPPPPPVPLLPPGTSPPVDPFTTLASKASPTLDFTER). Ser1053 bears the Phosphoserine mark. The span at 1108–1130 (PPPPRPVAPPTRPAPPQRPPPPS) shows a compositional bias: pro residues. 2 positions are modified to phosphoserine: Ser1150 and Ser1178. At Arg1201 the chain carries Omega-N-methylarginine. Residue Thr1220 is modified to Phosphothreonine. The segment covering 1221–1234 (PESQSKTSETSKGS) has biased composition (polar residues). Ser1292 is subject to Phosphoserine. Low complexity predominate over residues 1293–1304 (SHSLPSEASSQP). Positions 1313 to 1322 (DGKRESPLKI) are enriched in basic and acidic residues. A phosphoserine mark is found at Ser1318 and Ser1345. Thr1349 bears the Phosphothreonine mark. The span at 1382-1407 (RSQSQENMRSSPNPFITGLTRTNPFS) shows a compositional bias: polar residues. A run of 3 repeats spans residues 1396-1398 (FIT), 1406-1408 (FSD), and 1417-1419 (FRA). Positions 1396 to 1419 (FITGLTRTNPFSDRTAAPGNPFRA) are 3 X 3 AA repeats of N-P-F. Over residues 1536–1555 (RRPPPPPVPLLPPGTSPPVD) the composition is skewed to pro residues. Residues Ser1551 and Ser1565 each carry the phosphoserine modification.

This sequence belongs to the synaptojanin family. The protein in the central section; belongs to the inositol 1,4,5-trisphosphate 5-phosphatase family. As to quaternary structure, interacts with ASH/GRB2. Interacts with PACSIN1, PACSIN2 and PACSIN3. Interacts with AMPH, SH3GL1, SH3GL2 and SH3GL3. Interacts with MYO1E (via SH3 domain). Interacts with BIN1 and DNM1. Interacts with EPS15.

It is found in the cytoplasm. The protein localises to the perinuclear region. The catalysed reaction is a 1,2-diacyl-sn-glycero-3-phospho-(1D-myo-inositol-4,5-bisphosphate) + H2O = a 1,2-diacyl-sn-glycero-3-phospho-(1D-myo-inositol 4-phosphate) + phosphate. Phosphatase that acts on various phosphoinositides, including phosphatidylinositol 4-phosphate, phosphatidylinositol (4,5)-bisphosphate and phosphatidylinositol (3,4,5)-trisphosphate. Has a role in clathrin-mediated endocytosis. Hydrolyzes PIP2 bound to actin regulatory proteins resulting in the rearrangement of actin filaments downstream of tyrosine kinase and ASH/GRB2. The chain is Synaptojanin-1 (SYNJ1) from Homo sapiens (Human).